The primary structure comprises 559 residues: Arginine--tRNA ligase (559 aa).

Residues 116-126 (ANPNGPLHVGH) carry the 'HIGH' region motif.

This sequence belongs to the class-I aminoacyl-tRNA synthetase family.

Its subcellular location is the cytoplasm. The enzyme catalyses tRNA(Arg) + L-arginine + ATP = L-arginyl-tRNA(Arg) + AMP + diphosphate. In Methanosphaerula palustris (strain ATCC BAA-1556 / DSM 19958 / E1-9c), this protein is Arginine--tRNA ligase.